We begin with the raw amino-acid sequence, 376 residues long: N-acetyldiaminopimelate deacetylase (376 aa).

D69 is a catalytic residue. E128 (proton acceptor) is an active-site residue.

Belongs to the peptidase M20A family. N-acetyldiaminopimelate deacetylase subfamily.

It carries out the reaction N-acetyl-(2S,6S)-2,6-diaminopimelate + H2O = (2S,6S)-2,6-diaminopimelate + acetate. The protein operates within amino-acid biosynthesis; L-lysine biosynthesis via DAP pathway; LL-2,6-diaminopimelate from (S)-tetrahydrodipicolinate (acetylase route): step 3/3. Its function is as follows. Catalyzes the conversion of N-acetyl-diaminopimelate to diaminopimelate and acetate. This Streptococcus uberis (strain ATCC BAA-854 / 0140J) protein is N-acetyldiaminopimelate deacetylase.